Reading from the N-terminus, the 354-residue chain is Ribosomal RNA large subunit methyltransferase M (354 aa).

Residues S183, 216-219 (SPGG), D235, D255, and D271 contribute to the S-adenosyl-L-methionine site. The active-site Proton acceptor is the K300.

It belongs to the class I-like SAM-binding methyltransferase superfamily. RNA methyltransferase RlmE family. RlmM subfamily. In terms of assembly, monomer.

It is found in the cytoplasm. The enzyme catalyses cytidine(2498) in 23S rRNA + S-adenosyl-L-methionine = 2'-O-methylcytidine(2498) in 23S rRNA + S-adenosyl-L-homocysteine + H(+). In terms of biological role, catalyzes the 2'-O-methylation at nucleotide C2498 in 23S rRNA. The chain is Ribosomal RNA large subunit methyltransferase M from Pseudomonas putida (strain ATCC 47054 / DSM 6125 / CFBP 8728 / NCIMB 11950 / KT2440).